Here is a 907-residue protein sequence, read N- to C-terminus: Probable ubiquitin-conjugating enzyme E2 24 (907 aa).

Disordered stretches follow at residues 1–23 and 485–509; these read MEMS…EHEE and SSTV…EASS. Over residues 495–509 the composition is skewed to polar residues; it reads QDLSQKISQSDEASS. Residues 662 to 822 enclose the UBC core domain; sequence SWVKKVQQEW…AFLITCKSMI (161 aa). The Glycyl thioester intermediate role is filled by Cys-748.

The protein belongs to the ubiquitin-conjugating enzyme family. In terms of assembly, interacts with PHO1. Interacts with NLA. As to expression, expressed in the vascular tissues of cotyledons, leaves, roots, sepals, filaments, anthers and junctions between the inflorescence stems and siliques.

It is found in the golgi apparatus membrane. The protein localises to the endoplasmic reticulum membrane. It carries out the reaction S-ubiquitinyl-[E1 ubiquitin-activating enzyme]-L-cysteine + [E2 ubiquitin-conjugating enzyme]-L-cysteine = [E1 ubiquitin-activating enzyme]-L-cysteine + S-ubiquitinyl-[E2 ubiquitin-conjugating enzyme]-L-cysteine.. It participates in protein modification; protein ubiquitination. E2 ubiquitin-protein ligase that mediates E1-dependent protein ubiquitination. Mediates PHO1 degradation through multivesicular body-mediated vacuolar proteolysis in response to inorganic phosphate (Pi) availability. Negatively regulates the protein abundance of PHF1 and PHT1s under Pi-sufficient conditions by facilitating the degradation of PHT1 proteins at the endomembrane. Functions cooperatively with NLA to regulate the abundance of the inorganic phosphate (Pi) transporters PHT1-1, PHT1-2 and PHT1-3 in different subcellular compartments. Regulates Pi homeostasis by mediating, cooperatively with NLA, polyubiquitination of PHT1-4 and its targeting for degradation. In Arabidopsis thaliana (Mouse-ear cress), this protein is Probable ubiquitin-conjugating enzyme E2 24.